An 88-amino-acid polypeptide reads, in one-letter code: MIEDIKGYKPHTEEKIGKVNAIKDAEVRLGLIFDALYDEFWEALDNCEDCEFAKNYAESLDQLTIAKTKLKEASMWACRAVFQPEEKY.

Tyr-8, Lys-9, His-11, Lys-23, Arg-79, and Phe-82 together coordinate 3',3'-cGAMP.

The protein belongs to the Acb2 family. Homohexamer when bound to 3',3'-cGAMP.

Functionally, antagonizes CBASS (cyclic oligonucleotide-based antiphage signaling system). Binds and sequesters host-produced 3',3'-cyclic GMP-AMP (cGAMP) with a dissociation constant of about 30 nM; each homohexamer binds 3 cGAMP molecules with 1 cGAMP molecule binding to 2 monomers. Sequestration of cGAMP inhibits the cGAMP-activated phospholipase activity of host CBASS effector protein CapV. In Enterobacteria phage T4 (Bacteriophage T4), this protein is Anti-CBASS protein 2.